The chain runs to 411 residues: Protein PHLOEM PROTEIN 2-LIKE A5 (411 aa).

In terms of domain architecture, TIR spans 20 to 157 (TGPQVFINFR…KWTEALFSVC (138 aa)). E94 is a catalytic residue.

It carries out the reaction NAD(+) + H2O = ADP-D-ribose + nicotinamide + H(+). The chain is Protein PHLOEM PROTEIN 2-LIKE A5 (PP2A5) from Arabidopsis thaliana (Mouse-ear cress).